The chain runs to 428 residues: Enolase (428 aa).

Gln163 lines the (2R)-2-phosphoglycerate pocket. Residue Glu205 is the Proton donor of the active site. Residues Asp242, Glu283, and Asp310 each contribute to the Mg(2+) site. 4 residues coordinate (2R)-2-phosphoglycerate: Lys335, Arg364, Ser365, and Lys386. The Proton acceptor role is filled by Lys335.

This sequence belongs to the enolase family. The cofactor is Mg(2+).

Its subcellular location is the cytoplasm. The protein localises to the secreted. The protein resides in the cell surface. It carries out the reaction (2R)-2-phosphoglycerate = phosphoenolpyruvate + H2O. It functions in the pathway carbohydrate degradation; glycolysis; pyruvate from D-glyceraldehyde 3-phosphate: step 4/5. Functionally, catalyzes the reversible conversion of 2-phosphoglycerate (2-PG) into phosphoenolpyruvate (PEP). It is essential for the degradation of carbohydrates via glycolysis. In Sulfurihydrogenibium sp. (strain YO3AOP1), this protein is Enolase.